A 133-amino-acid polypeptide reads, in one-letter code: CDGSH iron-sulfur domain-containing protein 2 homolog (133 aa).

Topologically, residues 1–35 (MQSVSQVVKTSLPNYLSSLPVPDTFGGWFKLSFKD) are lumenal. A helical transmembrane segment spans residues 36-58 (WLALIPPTAVVVGIGYVTYRAFY). At 59–133 (PKAHRTCKSG…NVGPIVIKKK (75 aa)) the chain is on the cytoplasmic side. Cys-99, Cys-101, Cys-110, and His-114 together coordinate [2Fe-2S] cluster.

The protein belongs to the CISD protein family. CISD2 subfamily. The cofactor is [2Fe-2S] cluster.

It is found in the endoplasmic reticulum membrane. The polypeptide is CDGSH iron-sulfur domain-containing protein 2 homolog (Drosophila virilis (Fruit fly)).